A 359-amino-acid polypeptide reads, in one-letter code: Outer membrane protein assembly factor BamC (359 aa).

The first 21 residues, Met-1–Ser-21, serve as a signal peptide directing secretion. The N-palmitoyl cysteine moiety is linked to residue Cys-22. A lipid anchor (S-diacylglycerol cysteine) is attached at Cys-22.

Belongs to the BamC family. In terms of assembly, part of the Bam complex.

It is found in the cell outer membrane. Its function is as follows. Part of the outer membrane protein assembly complex, which is involved in assembly and insertion of beta-barrel proteins into the outer membrane. This is Outer membrane protein assembly factor BamC from Kangiella koreensis (strain DSM 16069 / JCM 12317 / KCTC 12182 / SW-125).